A 999-amino-acid chain; its full sequence is Probable metabotropic glutamate receptor mgl-1 (999 aa).

L-glutamate is bound by residues Ser-202, 223 to 225 (AST), Tyr-273, Glu-363, and Lys-455. Asn-518 carries N-linked (GlcNAc...) asparagine glycosylation. Helical transmembrane passes span 682 to 704 (SLVPTILAVFGIIATLFVIVVYV), 719 to 739 (LSYILLISMIMCYCMTFVLLS), 751 to 769 (TGIGFAFSCLYSAMFVKTN), 792 to 812 (VVMTAMLAGVQLIGSLIWLSV), 836 to 857 (HHFLYSLAYDGFLIVLCTTYAV), 871 to 893 (FIGFSMYTTCVVWLSWIFFFFGT), and 904 to 929 (LCISISMSANVALACIFSPKLWIILF). The segment at 975–999 (DSTRRRSSRKTSQPTSTSSAHDTFL) is disordered. Residues 984–993 (KTSQPTSTSS) are compositionally biased toward low complexity.

The protein belongs to the G-protein coupled receptor 3 family.

It is found in the cell membrane. Functionally, G-protein coupled receptor for glutamate. Ligand binding causes a conformation change that triggers signaling via guanine nucleotide-binding proteins (G proteins) and modulates the activity of down-stream effectors. The protein is Probable metabotropic glutamate receptor mgl-1 (mgl-1) of Caenorhabditis elegans.